Here is an 889-residue protein sequence, read N- to C-terminus: DNA gyrase subunit A (889 aa).

In terms of domain architecture, Topo IIA-type catalytic spans 35–501 (LPDVRDGLKP…GFEDLEDEDL (467 aa)). The active-site O-(5'-phospho-DNA)-tyrosine intermediate is Y123. The short motif at 528–534 (QNRGGRG) is the GyrA-box element. Residues 811 to 889 (KEDAEDETNE…IQQSSDEDEE (79 aa)) form a disordered region. Residues 813–823 (DAEDETNEDEQ) are compositionally biased toward acidic residues. Basic and acidic residues predominate over residues 863–875 (DGRIEVRQDFMDR). The span at 876–889 (VEEDIQQSSDEDEE) shows a compositional bias: acidic residues.

This sequence belongs to the type II topoisomerase GyrA/ParC subunit family. As to quaternary structure, heterotetramer, composed of two GyrA and two GyrB chains. In the heterotetramer, GyrA contains the active site tyrosine that forms a transient covalent intermediate with DNA, while GyrB binds cofactors and catalyzes ATP hydrolysis.

Its subcellular location is the cytoplasm. It carries out the reaction ATP-dependent breakage, passage and rejoining of double-stranded DNA.. Its function is as follows. A type II topoisomerase that negatively supercoils closed circular double-stranded (ds) DNA in an ATP-dependent manner to modulate DNA topology and maintain chromosomes in an underwound state. Negative supercoiling favors strand separation, and DNA replication, transcription, recombination and repair, all of which involve strand separation. Also able to catalyze the interconversion of other topological isomers of dsDNA rings, including catenanes and knotted rings. Type II topoisomerases break and join 2 DNA strands simultaneously in an ATP-dependent manner. The sequence is that of DNA gyrase subunit A from Staphylococcus aureus (strain Mu50 / ATCC 700699).